A 135-amino-acid chain; its full sequence is UPF0102 protein PGN_1801 (135 aa).

The protein belongs to the UPF0102 family.

This is UPF0102 protein PGN_1801 from Porphyromonas gingivalis (strain ATCC 33277 / DSM 20709 / CIP 103683 / JCM 12257 / NCTC 11834 / 2561).